The following is a 61-amino-acid chain: [Thr6]-bradykinyl-Val,Asp (61 aa).

Residues M1–C22 form the signal peptide. The propeptide occupies E23–E50. Residues E24–D61 are disordered. The segment covering E30–E41 has biased composition (acidic residues). The residue at position 53 (P53) is a 4-hydroxyproline; in form [Hyp3,Thr6]-bradykinyl-Val,Asp and [Hyp3,Thr6]-bradykinin.

This sequence belongs to the frog skin active peptide (FSAP) family. Bradykinin-related peptide subfamily. Expressed by the skin glands.

Its subcellular location is the secreted. Its function is as follows. Induces relaxation of rat smooth muscle from tail artery (EC(50)=16.8 nM) and contraction of that from ileum (EC(50)=205 nM), urinary bladder (EC(50)=895 nM) and uterus (EC(50)=60.3 nM). Binds to both bradykinin receptor B1 (BDKRB1) and B2 (BDKRB2). Functionally, [Hyp3,Thr6]-bradykinin: Induces relaxation of rat smooth muscle from tail artery (EC(50)=56.7 nM) and contraction of that from ileum (EC(50)=588 nM), urinary bladder (EC(50)=4.6 uM) and uterus (EC(50)=3.9 nM). Binds to both bradykinin receptor B1 (BDKRB1) and B2 (BDKRB2). In arterial smooth muscle, the effect via BDKRB1 is stronger, in uterus, ileum and urinary bladder that via BDKRB2. In terms of biological role, induces relaxation of rat smooth muscle from tail artery (EC(50)=10.8 nM) and contraction of that from ileum (EC(50)=645 nM), urinary bladder (EC(50)=1.1 uM) and uterus (EC(50)=1.2 uM). Binds to both bradykinin receptor B1 (BDKRB1) and B2 (BDKRB2). Apart from uterus smooth muscle, the effect via B2 is stronger. [Hyp3,Thr6]-bradykinyl-Val,Asp: Induces relaxation of rat smooth muscle from tail artery (EC(50)=3.5 nM) and contraction of that from ileum (EC(50)=223 nM), urinary bladder (EC(50)=1.5 uM) and uterus (EC(50)=356 nM). Binds to both bradykinin receptor B1 (BDKRB1) and B2 (BDKRB2); the effects via B2 a stronger. The chain is [Thr6]-bradykinyl-Val,Asp from Agalychnis callidryas (Red-eyed tree frog).